Consider the following 230-residue polypeptide: Demethylmenaquinone methyltransferase (230 aa).

S-adenosyl-L-methionine is bound by residues Thr-62, Asp-80, 102–103, and Ser-119; that span reads DG.

This sequence belongs to the class I-like SAM-binding methyltransferase superfamily. MenG/UbiE family.

It carries out the reaction a 2-demethylmenaquinol + S-adenosyl-L-methionine = a menaquinol + S-adenosyl-L-homocysteine + H(+). The protein operates within quinol/quinone metabolism; menaquinone biosynthesis; menaquinol from 1,4-dihydroxy-2-naphthoate: step 2/2. Functionally, methyltransferase required for the conversion of demethylmenaquinol (DMKH2) to menaquinol (MKH2). The protein is Demethylmenaquinone methyltransferase of Streptomyces griseus subsp. griseus (strain JCM 4626 / CBS 651.72 / NBRC 13350 / KCC S-0626 / ISP 5235).